A 476-amino-acid polypeptide reads, in one-letter code: Stromelysin-2 (476 aa).

The first 17 residues, 1–17 (MMHLAFLVLLCLPVCSA), serve as a signal peptide directing secretion. A propeptide spans 18–98 (YPLSGAAKEE…PRCGVPDVGH (81 aa)) (activation peptide). Positions 89–96 (PRCGVPDV) match the Cysteine switch motif. The Zn(2+) site is built by Cys91, His167, Asp169, His182, His195, and His217. The active site involves Glu218. Residues His221 and His227 each coordinate Zn(2+). Hemopexin repeat units follow at residues 286-335 (PAKC…WPSL), 336-382 (PSYL…GFPP), 384-432 (IRKI…FPGV), and 433-476 (EPKV…WLHC). Cysteines 289 and 476 form a disulfide.

Belongs to the peptidase M10A family. The cofactor is Zn(2+). Ca(2+) serves as cofactor.

It localises to the secreted. The protein localises to the extracellular space. It is found in the extracellular matrix. The catalysed reaction is Similar to stromelysin 1, but action on collagen types III, IV and V is weak.. Can degrade fibronectin, gelatins of type I, III, IV, and V; weakly collagens III, IV, and V. Activates procollagenase. This is Stromelysin-2 (MMP10) from Homo sapiens (Human).